Here is a 138-residue protein sequence, read N- to C-terminus: PTS system sorbose-specific EIIA component (138 aa).

The PTS EIIA type-4 domain maps to 1–125 (MEIILVGHAH…KIKEEFSTSL (125 aa)). Residue H8 is the Tele-phosphohistidine intermediate of the active site. Position 8 is a phosphohistidine; by HPr (H8).

The protein localises to the cytoplasm. Its function is as follows. The phosphoenolpyruvate-dependent sugar phosphotransferase system (PTS), a major carbohydrate active transport system, catalyzes the phosphorylation of incoming sugar substrates concomitant with their translocation across the cell membrane. The enzyme II SorABCD PTS system is involved in L-sorbose transport. The chain is PTS system sorbose-specific EIIA component from Lacticaseibacillus casei (Lactobacillus casei).